A 225-amino-acid polypeptide reads, in one-letter code: Uracil-DNA glycosylase (225 aa).

Catalysis depends on Asp-65, which acts as the Proton acceptor.

The protein belongs to the uracil-DNA glycosylase (UDG) superfamily. UNG family.

The protein resides in the cytoplasm. The enzyme catalyses Hydrolyzes single-stranded DNA or mismatched double-stranded DNA and polynucleotides, releasing free uracil.. Excises uracil residues from the DNA which can arise as a result of misincorporation of dUMP residues by DNA polymerase or due to deamination of cytosine. This chain is Uracil-DNA glycosylase, found in Bacillus cereus (strain B4264).